Here is a 55-residue protein sequence, read N- to C-terminus: Large ribosomal subunit protein bL33 (55 aa).

This sequence belongs to the bacterial ribosomal protein bL33 family.

This Burkholderia cenocepacia (strain ATCC BAA-245 / DSM 16553 / LMG 16656 / NCTC 13227 / J2315 / CF5610) (Burkholderia cepacia (strain J2315)) protein is Large ribosomal subunit protein bL33.